A 792-amino-acid chain; its full sequence is Ribonucleoside-diphosphate reductase large subunit (792 aa).

Residues 1–92 enclose the ATP-cone domain; that stretch reads MHVIKRDGRQ…VSNLHKEAKK (92 aa). Residues 5–6, 11–17, threonine 53, and aspartate 57 contribute to the ATP site; these read KR and ERVMFDK. Residue lysine 17 is modified to N6-acetyllysine. GDP-binding residues include serine 202 and serine 217. Cysteine 218 and cysteine 444 form a disulfide bridge. DTTP is bound by residues 226–228, lysine 243, arginine 256, and 263–264; these read DSI and AG. Lysine 376 carries the post-translational modification N6-acetyllysine. Residue serine 427 is the Proton acceptor of the active site. The active-site Cysteine radical intermediate is cysteine 429. GDP contacts are provided by residues glutamate 431 and 604–607; that span reads TAST. Glutamate 431 serves as the catalytic Proton acceptor. Position 751 is a phosphothreonine (threonine 751).

It belongs to the ribonucleoside diphosphate reductase large chain family. In terms of assembly, heterodimer of a large and a small subunit. Interacts with RRM2B. Interacts with AHCYL1 which inhibits its activity.

It is found in the cytoplasm. It catalyses the reaction a 2'-deoxyribonucleoside 5'-diphosphate + [thioredoxin]-disulfide + H2O = a ribonucleoside 5'-diphosphate + [thioredoxin]-dithiol. With respect to regulation, under complex allosteric control mediated by deoxynucleoside triphosphates and ATP binding to separate specificity and activation sites on the M1 subunit. The type of nucleotide bound at the specificity site determines substrate preference. It seems probable that ATP makes the enzyme reduce CDP and UDP, dGTP favors ADP reduction and dTTP favors GDP reduction. Stimulated by ATP and inhibited by dATP binding to the activity site, the dATP inhibition is mediated by AHCYL1 which stabilizes dATP in the site. In terms of biological role, provides the precursors necessary for DNA synthesis. Catalyzes the biosynthesis of deoxyribonucleotides from the corresponding ribonucleotides. The protein is Ribonucleoside-diphosphate reductase large subunit (RRM1) of Pongo abelii (Sumatran orangutan).